Reading from the N-terminus, the 122-residue chain is Serum amyloid A-3 protein (122 aa).

Residues 1-18 (MKPSIAIILCILILGVDS) form the signal peptide. Positions 87-122 (TGHGAEDSRADQFANEWGRSGKDPNHFRPAGLPKRY) are disordered.

The protein belongs to the SAA family. As to expression, found in various tissues.

Its subcellular location is the secreted. Major acute phase reactant. Apolipoprotein of the HDL complex. In vitro exhibits antimicrobial activity against Escherichia coli, Streptococcus uberis and Pseudomonas aeruginosa. This Mus musculus (Mouse) protein is Serum amyloid A-3 protein (Saa3).